We begin with the raw amino-acid sequence, 801 residues long: Na(+)/H(+) antiporter subunit A1 (801 aa).

19 consecutive transmembrane segments (helical) span residues 1–21 (MSLLHIAVILPLIFVLIIPIL), 28–48 (IHLGWFVLPVPIVIFIYMLTL), 79–99 (LGLLFSLLISGIGSLVVLYSI), 117–137 (LFMGAMLGVVLSDNVIILYLF), 166–186 (LIITVFGGLSLLGGIILLAIP), 206–226 (PFFIFAMILIMIGAFTKSAQF), 265–285 (IFAASQGWIWTVTLVGLITLF), 300–320 (ILAFSTVSQLGMIMAMLGIGA), 337–357 (FTAAIFHLINHATFKGALFMI), 373–393 (LGGLLTIMPISFTITVITALS), 427–447 (LGYLFPIIGIVGSVFTFVYSI), 472–492 (ILMLLSPAILATLVIVFGLFP), 522–542 (GLTPAFLSTLVIYILGILLIV), 591–611 (LVIIFGALILLTFVTVFSVPF), 623–643 (IFEVCIVILLLSAAFLILFAK), 646–666 (LFNIIMLSAVGYAVSVLFIFF), 671–691 (LALTQFVVESISTALFLLCFY), 707–727 (LTNALIAGGVGLSVIIIGLIA), and 764–784 (MDTLFESSVLGIAGLAVYTMI).

The protein belongs to the CPA3 antiporters (TC 2.A.63) subunit A family. In terms of assembly, may form a heterooligomeric complex that consists of seven subunits: mnhA1, mnhB1, mnhC1, mnhD1, mnhE1, mnhF1 and mnhG1.

Its subcellular location is the cell membrane. Mnh complex is a Na(+)/H(+) antiporter involved in Na(+) excretion. The polypeptide is Na(+)/H(+) antiporter subunit A1 (mnhA1) (Staphylococcus aureus (strain bovine RF122 / ET3-1)).